A 198-amino-acid polypeptide reads, in one-letter code: Photosystem I assembly protein Ycf4 (198 aa).

The disordered stretch occupies residues 1-20; the sequence is MTASTTINKGDSPNGDSSAS. The next 2 membrane-spanning stretches (helical) occupy residues 38–58 and 78–98; these read WASI…SSYL and LVMG…WLAI.

The protein belongs to the Ycf4 family.

The protein resides in the cellular thylakoid membrane. Functionally, seems to be required for the assembly of the photosystem I complex. In Trichormus variabilis (strain ATCC 29413 / PCC 7937) (Anabaena variabilis), this protein is Photosystem I assembly protein Ycf4.